A 285-amino-acid polypeptide reads, in one-letter code: HTH-type transcriptional regulator MurR (285 aa).

Residues 1–77 enclose the HTH rpiR-type domain; it reads MLYLTKISNA…MALIGEYSAS (77 aa). The H-T-H motif DNA-binding region spans 37–56; the sequence is SRQMAKQLGISQSSIVKFAQ. Residues 128 to 268 enclose the SIS domain; that stretch reads IIEVISKAPF…FVGLVQLNDV (141 aa).

In terms of assembly, homotetramer.

It participates in amino-sugar metabolism; N-acetylmuramate degradation [regulation]. Its function is as follows. Represses the expression of the murPQ operon involved in the uptake and degradation of N-acetylmuramic acid (MurNAc). Binds to two adjacent inverted repeats within the operator region. MurNAc 6-phosphate, the substrate of MurQ, is the specific inducer that weakens binding of MurR to the operator. The chain is HTH-type transcriptional regulator MurR from Escherichia coli (strain K12 / MC4100 / BW2952).